Consider the following 258-residue polypeptide: Phosphatidylglycerol--prolipoprotein diacylglyceryl transferase (258 aa).

Transmembrane regions (helical) follow at residues 9-29 (ILIQ…ATGF), 53-73 (LLTY…TLIY), 90-110 (EGGL…WLFV), 117-139 (KFLW…IRLG), 169-189 (PVQL…LMLF), 198-218 (GFLF…IEYF), and 230-250 (LISV…VLML). Position 137 (R137) interacts with a 1,2-diacyl-sn-glycero-3-phospho-(1'-sn-glycerol).

Belongs to the Lgt family.

It is found in the cell inner membrane. It carries out the reaction L-cysteinyl-[prolipoprotein] + a 1,2-diacyl-sn-glycero-3-phospho-(1'-sn-glycerol) = an S-1,2-diacyl-sn-glyceryl-L-cysteinyl-[prolipoprotein] + sn-glycerol 1-phosphate + H(+). The protein operates within protein modification; lipoprotein biosynthesis (diacylglyceryl transfer). In terms of biological role, catalyzes the transfer of the diacylglyceryl group from phosphatidylglycerol to the sulfhydryl group of the N-terminal cysteine of a prolipoprotein, the first step in the formation of mature lipoproteins. In Tolumonas auensis (strain DSM 9187 / NBRC 110442 / TA 4), this protein is Phosphatidylglycerol--prolipoprotein diacylglyceryl transferase.